The sequence spans 103 residues: MKNQKIRIRLKAFDYKLIDQSAAEIVDTAKRTGAVVRGPVPLPTRIRRYDVLRSPHVNKTSRDQFEIHTHQRLMDIVDPTDKTVDALMRLDLPAGVDVEIALQ.

The protein belongs to the universal ribosomal protein uS10 family. As to quaternary structure, part of the 30S ribosomal subunit.

Functionally, involved in the binding of tRNA to the ribosomes. This chain is Small ribosomal subunit protein uS10, found in Bordetella parapertussis (strain 12822 / ATCC BAA-587 / NCTC 13253).